The sequence spans 837 residues: Zinc fingers and homeoboxes protein 2 (837 aa).

The interaction with EFNB1 stretch occupies residues 27-77; that stretch reads VDRAKEKGIGTPQPDVAKDSWAAELENSSKENEVIEVKSMGESQSKKLQGG. Thr-37 bears the Phosphothreonine mark. Lys-64 is covalently cross-linked (Glycyl lysine isopeptide (Lys-Gly) (interchain with G-Cter in SUMO2)). 2 C2H2-type zinc fingers span residues 78-101 and 110-133; these read YECK…DMQH and YVCA…SKFH. A compositionally biased stretch (low complexity) spans 164–180; that stretch reads SITTSGPGTGDSDSGIS. Residues 164-204 form a disordered region; it reads SITTSGPGTGDSDSGISVSKTPIMKPGKPKADAKKVPKKPE. Positions 192-204 are enriched in basic and acidic residues; that stretch reads PKADAKKVPKKPE. The required for homodimerization stretch occupies residues 195–358; sequence DAKKVPKKPE…PAQLAPTKVT (164 aa). At Thr-207 the chain carries Phosphothreonine. DNA-binding regions (homeobox) lie at residues 263–324, 439–501, 530–591, and 628–690; these read NTTK…WSPE, TPAS…IVHI, PQKF…EQAV, and SPSP…TVKW. The required for repressor activity stretch occupies residues 263–446; the sequence is NTTKYNSALD…PLTPASDRKK (184 aa). Residues 263–497 are required for interaction with NFYA; sequence NTTKYNSALD…SDHRYRCQRG (235 aa). The interval 317 to 446 is required for nuclear localization; the sequence is HGISWSPEEV…PLTPASDRKK (130 aa). A disordered region spans residues 404-445; sequence GQKRPLVTPQAAPEPKRPHIAQVPEPPPKVANPPLTPASDRK. Residues 427 to 439 show a composition bias toward pro residues; it reads PEPPPKVANPPLT. A Glycyl lysine isopeptide (Lys-Gly) (interchain with G-Cter in SUMO2) cross-link involves residue Lys-455. Residues 755–837 form a disordered region; the sequence is PAKDCLPAKP…DCVPAEAGQA (83 aa). A phosphoserine mark is found at Ser-825 and Ser-827.

Belongs to the ZHX family. Homodimer (via homeobox domain). Heterodimer with ZHX1 (via homeobox domain 1). Heterodimer with ZHX3 (via homeobox domain 1). Heterodimerization with ZHX1 is not necessary for repressor activity. Interacts (via homeobox domain) with NFYA (via N-terminus). Interacts with EFNB1 intracellular domain peptide; the interaction enhances ZHX2 transcriptional repression activity. Ubiquitously expressed. Expressed in podocytes.

It is found in the nucleus. In terms of biological role, acts as a transcriptional repressor. Represses the promoter activity of the CDC25C gene stimulated by NFYA. May play a role in retinal development where it regulates the composition of bipolar cell populations, by promoting differentiation of bipolar OFF-type cells. In the brain, may promote maintenance and suppress differentiation of neural progenitor cells in the developing cortex. The chain is Zinc fingers and homeoboxes protein 2 (ZHX2) from Homo sapiens (Human).